A 51-amino-acid polypeptide reads, in one-letter code: uncharacterized protein (51 aa).

The chain crosses the membrane as a helical span at residues 20-42; that stretch reads NFFSRMWNAVVFGFGAAIGASVA.

Its subcellular location is the membrane. This is an uncharacterized protein from Schizosaccharomyces pombe (strain 972 / ATCC 24843) (Fission yeast).